The chain runs to 199 residues: Nucleoside triphosphate pyrophosphatase (199 aa).

Catalysis depends on D76, which acts as the Proton acceptor.

The protein belongs to the Maf family. The cofactor is a divalent metal cation.

The protein localises to the cytoplasm. It carries out the reaction a ribonucleoside 5'-triphosphate + H2O = a ribonucleoside 5'-phosphate + diphosphate + H(+). It catalyses the reaction a 2'-deoxyribonucleoside 5'-triphosphate + H2O = a 2'-deoxyribonucleoside 5'-phosphate + diphosphate + H(+). In terms of biological role, nucleoside triphosphate pyrophosphatase. May have a dual role in cell division arrest and in preventing the incorporation of modified nucleotides into cellular nucleic acids. This is Nucleoside triphosphate pyrophosphatase from Caulobacter vibrioides (strain ATCC 19089 / CIP 103742 / CB 15) (Caulobacter crescentus).